Consider the following 668-residue polypeptide: Threonine--tRNA ligase (668 aa).

The 64-residue stretch at 1–64 folds into the TGS domain; sequence MSEAIFLTFP…ADGKIEIITR (64 aa). Positions 245 to 553 are catalytic; that stretch reads DHRKLGREMD…LIENFAGHLP (309 aa). Residues Cys347, His398, and His530 each contribute to the Zn(2+) site.

The protein belongs to the class-II aminoacyl-tRNA synthetase family. In terms of assembly, homodimer. Zn(2+) is required as a cofactor.

It is found in the cytoplasm. The catalysed reaction is tRNA(Thr) + L-threonine + ATP = L-threonyl-tRNA(Thr) + AMP + diphosphate + H(+). Functionally, catalyzes the attachment of threonine to tRNA(Thr) in a two-step reaction: L-threonine is first activated by ATP to form Thr-AMP and then transferred to the acceptor end of tRNA(Thr). Also edits incorrectly charged L-seryl-tRNA(Thr). The chain is Threonine--tRNA ligase from Rhizobium leguminosarum bv. trifolii (strain WSM2304).